We begin with the raw amino-acid sequence, 186 residues long: Thiol:disulfide interchange protein CycY (186 aa).

The N-terminal stretch at 1–20 (MGRYTLALLPLIVFGGIAHG) is a signal peptide. The Thioredoxin domain maps to 47–182 (DAEPAAARRA…LVPAMEKALG (136 aa)). Cys80 and Cys83 form a disulfide bridge.

The protein belongs to the thioredoxin family. DsbE subfamily.

Its subcellular location is the periplasm. Required for disulfide bond formation in some periplasmic proteins. Also acts as a disulfide oxidoreductase in cytochromes c biogenesis. The cysteines of apocytochromes c must be in the reduced state for covalent linkage between the two moieties to occur. The polypeptide is Thiol:disulfide interchange protein CycY (cycY) (Rhizobium leguminosarum bv. viciae).